The sequence spans 190 residues: High affinity copper uptake protein 1 (190 aa).

The segment at 1–35 (MDHSHHMGMSYMDSNSTMQPSHHHPTTSASHSHGG) is disordered. Over 1 to 61 (MDHSHHMGMS…KNVELLFSGL (61 aa)) the chain is Extracellular. Positions 5 to 6 (HH) match the Bis-His motif motif. The Methionine segments (Mets) motif signature appears at 7-12 (MGMSYM). Asn15 is a glycosylation site (N-linked (GlcNAc...) asparagine). Residues 26 to 35 (TTSASHSHGG) show a composition bias toward low complexity. An O-linked (GalNAc...) threonine glycan is attached at Thr27. Residues 62–82 (VINTAGEMAGAFVAVFLLAMF) form a helical membrane-spanning segment. Over 83-132 (YEGLKIARESLLRKSQVSIRYNSMPVPGPNGTILMETHKTVGQQMLSFPH) the chain is Cytoplasmic. Position 114 is a phosphothreonine (Thr114). A helical transmembrane segment spans residues 133 to 153 (LLQTVLHIIQVVISYFLMLIF). At 154-156 (MTY) the chain is on the extracellular side. Residues 157-177 (NGYLCIAVAAGAGTGYFLFSW) traverse the membrane as a helical segment. The Cytoplasmic portion of the chain corresponds to 178 to 190 (KKAVVVDITEHCH). Cys189 bears the Cysteine sulfenic acid (-SOH) mark.

This sequence belongs to the copper transporter (Ctr) (TC 1.A.56) family. SLC31A subfamily. As to quaternary structure, homotrimer; is stabilized by cisplatin via interactions between cisplatin and the methionine-rich clusters, and could be crucial for the copper(2+) reduction process and copper(1+) stabilization. Heterotrimer between SLC31A1, CCS and SOD1; this heterotrimer is copper(1+)-mediated and its maintenance is regulated through SOD1 activation. Interacts with KDR; this interaction is induced upon VEGFA stimulation leading to SLC31A1 and KDR subsequent co-internalization to early endosomes, thereby activating KDR downstream signaling in endothelial cells. Interacts (via C-terminal domain) with ATOX1 (via dimer form); this interaction improves ATOX1 stability and controls intracellular copper(1+) levels. Interacts with SLC31A2; this interaction stabilizes SLC31A2 and protects its from ubiquitination and degradation. Interacts (via C-terminal domain) with CCS; this interaction is copper(1+)-mediated. Post-translationally, O-Glycosylation at Thr-27 protects from proteolytic cleavage in the N-terminal extracellular domain. In terms of processing, proteolytic cleavage, leading to a truncated form, is facilitated by SLC31A2 and initiated preferentially by CTSL and to a minor extend by CTSB in endolysosomal compartments. In vitro, is cleaved by CTSL/cathepsin L between residues 8 and 9 from the amino terminus. A post-CTSL/cathepsin L processing occurs to yield to the fully truncated form. Sulfenylated at Cys-189 after stimulation with VEGFA, which induces SLC31A1-KDR disulfide bond formation and their co-internalization to early endosomes, driving to a sustained VEGFR2 signaling.

The protein localises to the cell membrane. It localises to the early endosome membrane. It is found in the recycling endosome membrane. Its subcellular location is the apical cell membrane. The protein resides in the late endosome membrane. The protein localises to the basolateral cell membrane. The catalysed reaction is Ag(+)(out) = Ag(+)(in). It carries out the reaction Cu(+)(out) = Cu(+)(in). Copper(1+) transport is stimulated by extracellular acidic pH and high potassium ions concentrations. Copper(1+) import is regulated by a copper(1+)-dependent recycling of SLC31A1. Its function is as follows. Uniporter that mediates the transport of copper(1+) from the extracellular space to the cytoplasm, across the plasma membrane and delivers directly copper(1+) to specific chaperone such as ATOX1, via a copper(1+)- mediated transient interaction between the C-terminal domain and a copper(1+) chaperone, thus controlling intracellular copper(1+) levels. May function in copper(1+) import from the apical membrane thus may drive intestinal copper absorption. The copper(1+) transport mechanism is sodium-independent, saturable and of high-affinity. Also mediates the uptake of silver(1+). May function in the influx of the platinum-containing chemotherapeutic agents. The platinum-containing chemotherapeutic agents uptake is saturable. In vitro, mediates the transport of cadmium(2+) into cells. Also participates in the first step of copper(2+) acquisition by cells through a direct transfer of copper(2+) from copper(2+) carriers in blood, such as ALB to the N-terminal domain of SLC31A1, leading to copper(2+) reduction and probably followed by copper(1+) stabilization. In addition, functions as a redox sensor to promote angiogenesis in endothelial cells, in a copper(1+) transport independent manner, by transmitting the VEGF-induced ROS signal through a sulfenylation at Cys-189 leadin g to a subsequent disulfide bond formation between SLC31A1 and KDR. The SLC31A1-KDR complex is then co-internalized to early endosomes, driving a sustained VEGFR2 signaling. Functionally, mobilizes copper(1+) out of the endosomal compartment, making copper(1+) available for export out of the cells. The polypeptide is High affinity copper uptake protein 1 (Homo sapiens (Human)).